We begin with the raw amino-acid sequence, 460 residues long: Argininosuccinate lyase (460 aa).

This sequence belongs to the lyase 1 family. Argininosuccinate lyase subfamily.

The protein resides in the cytoplasm. It catalyses the reaction 2-(N(omega)-L-arginino)succinate = fumarate + L-arginine. Its pathway is amino-acid biosynthesis; L-arginine biosynthesis; L-arginine from L-ornithine and carbamoyl phosphate: step 3/3. The chain is Argininosuccinate lyase from Campylobacter jejuni subsp. doylei (strain ATCC BAA-1458 / RM4099 / 269.97).